The following is a 111-amino-acid chain: Probable 4-amino-4-deoxy-L-arabinose-phosphoundecaprenol flippase subunit ArnE (111 aa).

Helical transmembrane passes span 36 to 56 (IVLW…LWLL), 61 to 81 (VPVG…TLAA), and 88 to 108 (PVSP…VILG). One can recognise an EamA domain in the interval 40 to 109 (LGLALACLGL…IIGGIVILGS (70 aa)).

This sequence belongs to the ArnE family. Heterodimer of ArnE and ArnF.

It is found in the cell inner membrane. It functions in the pathway bacterial outer membrane biogenesis; lipopolysaccharide biosynthesis. Translocates 4-amino-4-deoxy-L-arabinose-phosphoundecaprenol (alpha-L-Ara4N-phosphoundecaprenol) from the cytoplasmic to the periplasmic side of the inner membrane. The sequence is that of Probable 4-amino-4-deoxy-L-arabinose-phosphoundecaprenol flippase subunit ArnE from Shigella flexneri.